Consider the following 224-residue polypeptide: 7-cyano-7-deazaguanine synthase (224 aa).

Residue 10-20 (LSGGLDSATVV) participates in ATP binding. Zn(2+) is bound by residues C189, C199, C202, and C205.

Belongs to the QueC family. The cofactor is Zn(2+).

The enzyme catalyses 7-carboxy-7-deazaguanine + NH4(+) + ATP = 7-cyano-7-deazaguanine + ADP + phosphate + H2O + H(+). The protein operates within purine metabolism; 7-cyano-7-deazaguanine biosynthesis. Catalyzes the ATP-dependent conversion of 7-carboxy-7-deazaguanine (CDG) to 7-cyano-7-deazaguanine (preQ(0)). The sequence is that of 7-cyano-7-deazaguanine synthase from Pseudomonas fluorescens (strain SBW25).